We begin with the raw amino-acid sequence, 308 residues long: Ribosomal RNA large subunit methyltransferase F (308 aa).

Residues 190–212 (DSAASARAGSERKRRNLGQDKND) form a disordered region.

The protein belongs to the methyltransferase superfamily. METTL16/RlmF family.

The protein resides in the cytoplasm. It carries out the reaction adenosine(1618) in 23S rRNA + S-adenosyl-L-methionine = N(6)-methyladenosine(1618) in 23S rRNA + S-adenosyl-L-homocysteine + H(+). In terms of biological role, specifically methylates the adenine in position 1618 of 23S rRNA. The chain is Ribosomal RNA large subunit methyltransferase F from Citrobacter koseri (strain ATCC BAA-895 / CDC 4225-83 / SGSC4696).